Here is a 222-residue protein sequence, read N- to C-terminus: Large ribosomal subunit protein uL1 (222 aa).

The protein belongs to the universal ribosomal protein uL1 family. As to quaternary structure, part of the 50S ribosomal subunit.

Binds directly to 23S rRNA. Probably involved in E site tRNA release. In terms of biological role, protein L1 is also a translational repressor protein, it controls the translation of its operon by binding to its mRNA. This chain is Large ribosomal subunit protein uL1, found in Pyrobaculum aerophilum (strain ATCC 51768 / DSM 7523 / JCM 9630 / CIP 104966 / NBRC 100827 / IM2).